Consider the following 261-residue polypeptide: Tryptophan synthase alpha chain (261 aa).

Catalysis depends on proton acceptor residues E49 and D60.

Belongs to the TrpA family. In terms of assembly, tetramer of two alpha and two beta chains.

The enzyme catalyses (1S,2R)-1-C-(indol-3-yl)glycerol 3-phosphate + L-serine = D-glyceraldehyde 3-phosphate + L-tryptophan + H2O. It functions in the pathway amino-acid biosynthesis; L-tryptophan biosynthesis; L-tryptophan from chorismate: step 5/5. In terms of biological role, the alpha subunit is responsible for the aldol cleavage of indoleglycerol phosphate to indole and glyceraldehyde 3-phosphate. This is Tryptophan synthase alpha chain from Roseiflexus castenholzii (strain DSM 13941 / HLO8).